Consider the following 334-residue polypeptide: Holliday junction branch migration complex subunit RuvB (334 aa).

The interval 1-182 (MDERLVSSEA…FGVMSRLEYY (182 aa)) is large ATPase domain (RuvB-L). ATP contacts are provided by residues L21, R22, G63, K66, T67, T68, 129 to 131 (EDF), R172, Y182, and R219. Mg(2+) is bound at residue T67. The small ATPAse domain (RuvB-S) stretch occupies residues 183-253 (TQEELADIVT…ISQNALERLQ (71 aa)). The segment at 256-334 (RLGLDHIDHK…HFQMEAPRYD (79 aa)) is head domain (RuvB-H). The DNA site is built by R311 and R316.

The protein belongs to the RuvB family. Homohexamer. Forms an RuvA(8)-RuvB(12)-Holliday junction (HJ) complex. HJ DNA is sandwiched between 2 RuvA tetramers; dsDNA enters through RuvA and exits via RuvB. An RuvB hexamer assembles on each DNA strand where it exits the tetramer. Each RuvB hexamer is contacted by two RuvA subunits (via domain III) on 2 adjacent RuvB subunits; this complex drives branch migration. In the full resolvosome a probable DNA-RuvA(4)-RuvB(12)-RuvC(2) complex forms which resolves the HJ. Homohexamer which interacts with RecU.

It is found in the cytoplasm. The catalysed reaction is ATP + H2O = ADP + phosphate + H(+). Its function is as follows. The RuvA-RuvB-RuvC complex processes Holliday junction (HJ) DNA during genetic recombination and DNA repair, while the RuvA-RuvB complex plays an important role in the rescue of blocked DNA replication forks via replication fork reversal (RFR). RuvA specifically binds to HJ cruciform DNA, conferring on it an open structure. The RuvB hexamer acts as an ATP-dependent pump, pulling dsDNA into and through the RuvAB complex. RuvB forms 2 homohexamers on either side of HJ DNA bound by 1 or 2 RuvA tetramers; 4 subunits per hexamer contact DNA at a time. Coordinated motions by a converter formed by DNA-disengaged RuvB subunits stimulates ATP hydrolysis and nucleotide exchange. Immobilization of the converter enables RuvB to convert the ATP-contained energy into a lever motion, pulling 2 nucleotides of DNA out of the RuvA tetramer per ATP hydrolyzed, thus driving DNA branch migration. The RuvB motors rotate together with the DNA substrate, which together with the progressing nucleotide cycle form the mechanistic basis for DNA recombination by continuous HJ branch migration. Branch migration allows RuvC to scan DNA until it finds its consensus sequence, where it cleaves and resolves cruciform DNA. The sequence is that of Holliday junction branch migration complex subunit RuvB from Bacillus subtilis (strain 168).